The sequence spans 394 residues: Actin-related protein 2-A (394 aa).

Residues 160–162, 214–218, and 305–310 contribute to the ATP site; these read GDG, RMMKE, and GGSTMY.

The protein belongs to the actin family. ARP2 subfamily. As to quaternary structure, component of the Arp2/3 complex composed of actr2/arp2, actr3/arp3, arpc1b, arpc2, arpc3, arpc4 and arpc5.

The protein resides in the cytoplasm. It localises to the cytoskeleton. It is found in the cell projection. Its subcellular location is the nucleus. Functionally, ATP-binding component of the Arp2/3 complex, a multiprotein complex that mediates actin polymerization upon stimulation by nucleation-promoting factor (NPF). The Arp2/3 complex mediates the formation of branched actin networks in the cytoplasm, providing the force for cell motility. Seems to contact the pointed end of the daughter actin filament. In addition to its role in the cytoplasmic cytoskeleton, the Arp2/3 complex also promotes actin polymerization in the nucleus, thereby regulating gene transcription and repair of damaged DNA. The Arp2/3 complex promotes homologous recombination (HR) repair in response to DNA damage by promoting nuclear actin polymerization, leading to drive motility of double-strand breaks (DSBs). The protein is Actin-related protein 2-A (actr2a) of Danio rerio (Zebrafish).